We begin with the raw amino-acid sequence, 264 residues long: uncharacterized protein (264 aa).

Positions 7, 9, 102, 138, 163, and 213 each coordinate a divalent metal cation.

The protein belongs to the metallo-dependent hydrolases superfamily. TatD-type hydrolase family. A divalent metal cation is required as a cofactor.

This is an uncharacterized protein from Buchnera aphidicola subsp. Acyrthosiphon pisum (strain APS) (Acyrthosiphon pisum symbiotic bacterium).